We begin with the raw amino-acid sequence, 165 residues long: Myosin regulatory light chain 2A, cardiac muscle isoform (165 aa).

A N,N,N-trimethylalanine modification is found at alanine 2. 3 consecutive EF-hand domains span residues 24 to 59 (AQIQEFKEAFTIMDQNRDGFIDKADLRDTFAALGRL), 94 to 128 (DPEETILNAFKVFDPEGKGLKSAYIKEMLMTQEGR), and 129 to 164 (FSQEEIDQMFAAFPPDVSGNLDYKNLVHVITHGEEK). Ca(2+) is bound by residues aspartate 37, asparagine 39, aspartate 41, and aspartate 48.

In terms of assembly, myosin is a hexamer of 2 heavy chains and 4 light chains. Post-translationally, the N-terminus is blocked. N,N,N-trimethylalanine, found in other myosin light chains would not have been detected in the N-terminal tryptic peptide in PubMed:7319048 because it would remain trimethylated and ninhydrin negative after hydrolysis.

This is Myosin regulatory light chain 2A, cardiac muscle isoform from Gallus gallus (Chicken).